Reading from the N-terminus, the 555-residue chain is Urocanate hydratase (555 aa).

NAD(+) contacts are provided by residues 51–52 (GG), glutamine 129, 175–177 (GMG), glutamate 195, 262–266 (QTSAH), 272–273 (YL), and tyrosine 321. Residue cysteine 409 is part of the active site. Glycine 491 lines the NAD(+) pocket.

Belongs to the urocanase family. The cofactor is NAD(+).

It is found in the cytoplasm. The enzyme catalyses 4-imidazolone-5-propanoate = trans-urocanate + H2O. Its pathway is amino-acid degradation; L-histidine degradation into L-glutamate; N-formimidoyl-L-glutamate from L-histidine: step 2/3. Catalyzes the conversion of urocanate to 4-imidazolone-5-propionate. The chain is Urocanate hydratase from Xanthomonas campestris pv. campestris (strain ATCC 33913 / DSM 3586 / NCPPB 528 / LMG 568 / P 25).